Here is a 545-residue protein sequence, read N- to C-terminus: MSTSLNYKSFSKEQQTMDNLEKQLICPICLEMFTKPVVILPCQHNLCRKCASDIFQASNPYLPTRGGTTVASGGRFRCPSCRHEVVLDRHGVYGLQRNLLVENIIDIYKQESTRPEKKLDQPMCEEHEEERINIYCLNCEVPTCSLCKVFGAHKDCQVAPLTHVFQRQKSELSDGIAVLVGSNDRVQGVISQLEDTCKTIEECCRKQKQDLCEKFDHLYSILEERKTEMTQAITRTQEEKLEHVRTLIRKYSDHLENVSKLVESGIQFMDEPEMAVFLQNAKTLLQKITEASKAFQMEKIEQGYEIMNNFTVNLNREEKIIREIDFSREEEDEDDEGEVDEEGEGEDAVEVEEAENVQVASSGEEETLEKAAEPSELAAEIQAASGPLLASSPDSVSSLPPAADVLVTQGEVVPTDSQQTTQSETSGPSAAETADPLFYPSWYKGQSRKMISNPPHTPGGEGLSQIGPSAAEDSSVQSAEVAEAAANEQAAVSGKESSSTAATSQIGFEASSPQGQAAALGSGGGADSEPARHVFSFSWLNSLNE.

The segment at 26–82 (CPICLEMFTKPVVILPCQHNLCRKCASDIFQASNPYLPTRGGTTVASGGRFRCPSCR) adopts an RING-type zinc-finger fold. The segment at 119–161 (LDQPMCEEHEEERINIYCLNCEVPTCSLCKVFGAHKDCQVAPL) adopts a B box-type zinc-finger fold. Zn(2+) contacts are provided by cysteine 124, histidine 127, cysteine 147, and histidine 153. Residues 219–258 (YSILEERKTEMTQAITRTQEEKLEHVRTLIRKYSDHLENV) adopt a coiled-coil conformation. A COS domain is found at 269–327 (MDEPEMAVFLQNAKTLLQKITEASKAFQMEKIEQGYEIMNNFTVNLNREEKIIREIDFS). Disordered regions lie at residues 324–378 (IDFS…SELA) and 406–528 (LVTQ…GADS). Positions 328–355 (REEEDEDDEGEVDEEGEGEDAVEVEEAE) are enriched in acidic residues. Composition is skewed to low complexity over residues 417–426 (SQQTTQSETS) and 469–493 (SAAE…AAVS). A compositionally biased stretch (polar residues) spans 495-506 (KESSSTAATSQI). Residues 510-520 (ASSPQGQAAAL) are compositionally biased toward low complexity.

Homooligomer and heterooligomer. Interacts with titin/TTN. Interacts with myosins. Interacts with SQSTM1 and NBR1. Probably interacts with TRIM63 and TRIM54. Post-translationally, targeted for degradation through the proteasomal and lysosomal pathways in the presence of SUMO3.

The protein resides in the nucleus. Its subcellular location is the cytoplasm. It catalyses the reaction S-ubiquitinyl-[E2 ubiquitin-conjugating enzyme]-L-cysteine + [acceptor protein]-L-lysine = [E2 ubiquitin-conjugating enzyme]-L-cysteine + N(6)-ubiquitinyl-[acceptor protein]-L-lysine.. Its function is as follows. E3 ubiquitin ligase that plays an important role in regulating cardiac development and contractility, muscle growth, metabolism, and fiber-type differentiation. Acts as a critical factor that regulates cardiomyocyte size during development in concert with TRIM63 by regulating E2F1-mediated gene expression. Plays a role in apoptosis induction in cardiomyocytes by promoting ubiquitination of the DUSP1 phosphatase. Promotes non-canonical NF-kappa-B signaling and B-cell-mediated immune responses by mediating NFKB2 'Lys-48'-linked ubiquitination and processing. In turn, NFKB2 is further processed by valosin-containing protein/VCP, an ATPase that mediates ubiquitin-dependent protein degradation by the proteasome. May play a role in preventing macrophages from producing inflammatory factors and migrating by downregulating the level of nuclear NF-kappa-B subunit RELA. Also modifies PPARG via polyubiquitination and accelerates PPARG proteasomal degradation to inhibit its activity. This Rattus norvegicus (Rat) protein is Tripartite motif-containing protein 55 (Trim55).